The chain runs to 294 residues: 2-hydroxy-3-oxopropionate reductase (294 aa).

NAD(+)-binding positions include 4–18 and Ser95; that span reads GFIG…MSKN. Lys170 is an active-site residue. Lys238 is an NAD(+) binding site.

It belongs to the HIBADH-related family. 2-hydroxy-3-oxopropionate reductase subfamily.

It catalyses the reaction (R)-glycerate + NADP(+) = 2-hydroxy-3-oxopropanoate + NADPH + H(+). The enzyme catalyses (R)-glycerate + NAD(+) = 2-hydroxy-3-oxopropanoate + NADH + H(+). It functions in the pathway carbohydrate acid metabolism; galactarate degradation; D-glycerate from galactarate: step 3/3. Functionally, catalyzes the reduction of tatronate semialdehyde to D-glycerate. The chain is 2-hydroxy-3-oxopropionate reductase from Escherichia coli O6:H1 (strain CFT073 / ATCC 700928 / UPEC).